An 86-amino-acid chain; its full sequence is Exodeoxyribonuclease 7 small subunit (86 aa).

Residues 64 to 86 are disordered; sequence SNPETVQDKTDTDEPDSNEFSLT.

It belongs to the XseB family. As to quaternary structure, heterooligomer composed of large and small subunits.

It is found in the cytoplasm. The catalysed reaction is Exonucleolytic cleavage in either 5'- to 3'- or 3'- to 5'-direction to yield nucleoside 5'-phosphates.. Bidirectionally degrades single-stranded DNA into large acid-insoluble oligonucleotides, which are then degraded further into small acid-soluble oligonucleotides. This is Exodeoxyribonuclease 7 small subunit from Akkermansia muciniphila (strain ATCC BAA-835 / DSM 22959 / JCM 33894 / BCRC 81048 / CCUG 64013 / CIP 107961 / Muc).